The sequence spans 120 residues: Phosphoribosyl-AMP cyclohydrolase (120 aa).

Aspartate 75 contacts Mg(2+). Zn(2+) is bound at residue cysteine 76. Mg(2+)-binding residues include aspartate 77 and aspartate 79. Zn(2+)-binding residues include cysteine 92 and cysteine 99.

Belongs to the PRA-CH family. As to quaternary structure, homodimer. Requires Mg(2+) as cofactor. It depends on Zn(2+) as a cofactor.

The protein localises to the cytoplasm. It catalyses the reaction 1-(5-phospho-beta-D-ribosyl)-5'-AMP + H2O = 1-(5-phospho-beta-D-ribosyl)-5-[(5-phospho-beta-D-ribosylamino)methylideneamino]imidazole-4-carboxamide. Its pathway is amino-acid biosynthesis; L-histidine biosynthesis; L-histidine from 5-phospho-alpha-D-ribose 1-diphosphate: step 3/9. Catalyzes the hydrolysis of the adenine ring of phosphoribosyl-AMP. The protein is Phosphoribosyl-AMP cyclohydrolase of Methanosarcina acetivorans (strain ATCC 35395 / DSM 2834 / JCM 12185 / C2A).